Reading from the N-terminus, the 388-residue chain is Succinate--CoA ligase [ADP-forming] subunit beta (388 aa).

Residues 9-236 enclose the ATP-grasp domain; the sequence is KKLFAEHGVP…VAAVDPLEQK (228 aa). ATP-binding positions include lysine 45, 52 to 54, glutamate 91, serine 94, and glutamate 99; that span reads GRG. Residues asparagine 191 and aspartate 205 each coordinate Mg(2+). Substrate contacts are provided by residues asparagine 256 and 318–320; that span reads GIT.

It belongs to the succinate/malate CoA ligase beta subunit family. In terms of assembly, heterotetramer of two alpha and two beta subunits. Requires Mg(2+) as cofactor.

The enzyme catalyses succinate + ATP + CoA = succinyl-CoA + ADP + phosphate. The catalysed reaction is GTP + succinate + CoA = succinyl-CoA + GDP + phosphate. It functions in the pathway carbohydrate metabolism; tricarboxylic acid cycle; succinate from succinyl-CoA (ligase route): step 1/1. Succinyl-CoA synthetase functions in the citric acid cycle (TCA), coupling the hydrolysis of succinyl-CoA to the synthesis of either ATP or GTP and thus represents the only step of substrate-level phosphorylation in the TCA. The beta subunit provides nucleotide specificity of the enzyme and binds the substrate succinate, while the binding sites for coenzyme A and phosphate are found in the alpha subunit. The protein is Succinate--CoA ligase [ADP-forming] subunit beta of Parafrankia sp. (strain EAN1pec).